The chain runs to 664 residues: Methionine--tRNA ligase (664 aa).

The 'HIGH' region signature appears at Tyr-15–His-25. A 'KMSKS' region motif is present at residues Lys-310–Ser-314. ATP is bound at residue Lys-313. Positions Asp-563–Lys-664 constitute a tRNA-binding domain.

Belongs to the class-I aminoacyl-tRNA synthetase family. MetG type 2B subfamily. Homodimer.

The protein localises to the cytoplasm. The catalysed reaction is tRNA(Met) + L-methionine + ATP = L-methionyl-tRNA(Met) + AMP + diphosphate. In terms of biological role, is required not only for elongation of protein synthesis but also for the initiation of all mRNA translation through initiator tRNA(fMet) aminoacylation. The polypeptide is Methionine--tRNA ligase (metG) (Listeria innocua serovar 6a (strain ATCC BAA-680 / CLIP 11262)).